The sequence spans 303 residues: Guanosine-inosine kinase (303 aa).

This sequence belongs to the carbohydrate kinase PfkB family. Homodimer. The cofactor is Mg(2+).

The enzyme catalyses guanosine + ATP = GMP + ADP + H(+). It catalyses the reaction inosine + ATP = IMP + ADP + H(+). It functions in the pathway purine metabolism; IMP biosynthesis via salvage pathway; IMP from inosine: step 1/1. The protein operates within purine metabolism; GMP biosynthesis via salvage pathway. With respect to regulation, kinase activity is stimulated by pyrimidine nucleotides, especially CMP and CTP, and inhibited by AMP, ADP and GMP. Activity is stimulated by potassium or ammonium ions. Its function is as follows. Catalyzes the phosphorylation of guanosine and inosine to GMP and IMP, respectively. Can also use deoxyguanosine. Shows a strong preference for guanosine. dATP, GTP and dGTP can serve as phosphate donors. This is Guanosine-inosine kinase from Exiguobacterium acetylicum (Brevibacterium acetylicum).